The following is a 1112-amino-acid chain: Electrogenic sodium bicarbonate cotransporter 4 (1112 aa).

Residues 1 to 13 (MKVEEKAGVKKLE) are compositionally biased toward basic and acidic residues. Disordered stretches follow at residues 1 to 80 (MKVE…SSLG), 220 to 255 (KKPIHRSLADIGKSVSTTNRSSARSPSAGPTLHHST), and 439 to 469 (GRSGASAGGGGSGGGAGGSGAGGGGSGNEAE). Topologically, residues 1–513 (MKVEEKAGVK…DFYDGFHIQS (513 aa)) are cytoplasmic. Composition is skewed to polar residues over residues 53 to 67 (QRVQWSLQPDKSQQD) and 233 to 244 (SVSTTNRSSARS). Over residues 444 to 465 (SAGGGGSGGGAGGSGAGGGGSG) the composition is skewed to gly residues. Residues 514–536 (ISAVLFIYLGCITNAITFGGLLG) traverse the membrane as a helical segment. The Extracellular portion of the chain corresponds to 537–547 (DATDNYQGVME). Residues 548-579 (SFLGTAMAGSLFCLFSGQPLIILSSTGPILIF) traverse the membrane as a helical segment. The Cytoplasmic portion of the chain corresponds to 580-598 (EKLLFDFSKANGLDYMEFR). Residues 599 to 620 (LWIGLHSAIQCLILVATDASFI) traverse the membrane as a helical segment. Residues 621-734 (IKYITRFTEE…LGSSCQFVPD (114 aa)) lie on the Extracellular side of the membrane. Residues 735 to 753 (LALMSFILFFGTYSMTLTL) traverse the membrane as a helical segment. Over 754 to 772 (KKFKFSRYFPTKVRTLVAD) the chain is Cytoplasmic. Residues 773-792 (FSIVFSILLFCGIDACFGLQ) form a helical membrane-spanning segment. The Extracellular portion of the chain corresponds to 793–820 (TPKLHVPNVIKPTRPDRGWFVAPFGKNP). Residues 821–839 (WWVYPASILPALLVTILIF) traverse the membrane as a helical segment. At 840–858 (MDQQITAVIVNRKENKLRK) the chain is on the cytoplasmic side. Residues 859–875 (AAGYHLDLFWVGILMAL) traverse the membrane as a helical segment. At 876 to 880 (CSFMG) the chain is on the extracellular side. The chain crosses the membrane as a helical span at residues 881–900 (LPWYVAATVISIAHIDSLKM). At 901–920 (ETETSAPGEQPQFLGVREQR) the chain is on the cytoplasmic side. Residues 921 to 940 (VTGVMVFILTGISVFLAPIL) traverse the membrane as a helical segment. Topologically, residues 941–945 (KYIPM) are extracellular. The chain crosses the membrane as a helical span at residues 946-966 (PVLYGVFLYMGVASLNGIQFW). The Cytoplasmic portion of the chain corresponds to 967–992 (DRCKLFLMPAKHQPDHAFLRHVPLRR). A helical membrane pass occupies residues 993–1010 (IHLFTLVQILCLALLWIL). At 1011–1015 (KSTMA) the chain is on the extracellular side. Residues 1016 to 1033 (AIIFPVMILGLIIVRRLL) form a helical membrane-spanning segment. The Cytoplasmic segment spans residues 1034-1112 (DLIFSQHDLA…KRSSSWSHSL (79 aa)). A compositionally biased stretch (basic and acidic residues) spans 1055–1074 (KESDRKKRRKEVHENTDKEP). The interval 1055 to 1112 (KESDRKKRRKEVHENTDKEPQFLPPSVVKIPMEGIPSDPQNGIHCVGRKRSSSWSHSL) is disordered.

It belongs to the anion exchanger (TC 2.A.31) family. As to expression, observed in hepatocytes and in the apical region of bile duct intrahepatic cholangiocytes of liver. Also observed in uroepithelium cells lining the outer pelvic wall of the kidney (at protein level). Highly expressed in colon, distal colon, liver, kidney and testis. Moderate expression in duodenum and stomach and weak expression in heart. In kidney, very weakly expressed in the inner medulla, but abundantly expressed in cortex and outer medulla in the medullary thick ascending and cortical thick ascending limbs of the loop of Henle.

It is found in the basolateral cell membrane. The protein resides in the apical cell membrane. The enzyme catalyses 2 hydrogencarbonate(out) + Na(+)(out) = 2 hydrogencarbonate(in) + Na(+)(in). It carries out the reaction 3 hydrogencarbonate(out) + Na(+)(out) = 3 hydrogencarbonate(in) + Na(+)(in). Mediates sodium- and bicarbonate-dependent electrogenic sodium bicarbonate cotransport, with a Na(+):HCO3(-) stoichiometry varying from 1:2 to 1:3. The protein is Electrogenic sodium bicarbonate cotransporter 4 of Rattus norvegicus (Rat).